A 163-amino-acid chain; its full sequence is Crossover junction endodeoxyribonuclease RuvC (163 aa).

Catalysis depends on residues Asp-7, Glu-68, and His-142. 3 residues coordinate Mg(2+): Asp-7, Glu-68, and His-142.

It belongs to the RuvC family. In terms of assembly, homodimer which binds Holliday junction (HJ) DNA. The HJ becomes 2-fold symmetrical on binding to RuvC with unstacked arms; it has a different conformation from HJ DNA in complex with RuvA. In the full resolvosome a probable DNA-RuvA(4)-RuvB(12)-RuvC(2) complex forms which resolves the HJ. It depends on Mg(2+) as a cofactor.

It is found in the cytoplasm. It catalyses the reaction Endonucleolytic cleavage at a junction such as a reciprocal single-stranded crossover between two homologous DNA duplexes (Holliday junction).. In terms of biological role, the RuvA-RuvB-RuvC complex processes Holliday junction (HJ) DNA during genetic recombination and DNA repair. Endonuclease that resolves HJ intermediates. Cleaves cruciform DNA by making single-stranded nicks across the HJ at symmetrical positions within the homologous arms, yielding a 5'-phosphate and a 3'-hydroxyl group; requires a central core of homology in the junction. The consensus cleavage sequence is 5'-(A/T)TT(C/G)-3'. Cleavage occurs on the 3'-side of the TT dinucleotide at the point of strand exchange. HJ branch migration catalyzed by RuvA-RuvB allows RuvC to scan DNA until it finds its consensus sequence, where it cleaves and resolves the cruciform DNA. This is Crossover junction endodeoxyribonuclease RuvC from Anaplasma phagocytophilum (strain HZ).